Reading from the N-terminus, the 239-residue chain is Ribonuclease 3 (239 aa).

The 123-residue stretch at 11-133 (HAAIQKKLGY…MFAAVSFDAD (123 aa)) folds into the RNase III domain. Glu46 serves as a coordination point for Mg(2+). Residue Asp50 is part of the active site. 2 residues coordinate Mg(2+): Asp119 and Glu122. Residue Glu122 is part of the active site. One can recognise a DRBM domain in the interval 160–230 (DGKTALQEAL…AKEALKWLEE (71 aa)).

It belongs to the ribonuclease III family. Homodimer. Requires Mg(2+) as cofactor.

Its subcellular location is the cytoplasm. It catalyses the reaction Endonucleolytic cleavage to 5'-phosphomonoester.. Digests double-stranded RNA. Involved in the processing of primary rRNA transcript to yield the immediate precursors to the large and small rRNAs (23S and 16S). Also processes some mRNAs, and tRNAs when they are encoded in the rRNA operon. Functionally, CRISPR (clustered regularly interspaced short palindromic repeat) is an adaptive immune system that provides protection against mobile genetic elements (viruses, transposable elements and conjugative plasmids). CRISPR clusters contain spacers, sequences complementary to antecedent mobile elements, and target invading nucleic acids. CRISPR clusters are transcribed and processed into CRISPR RNA (crRNA). In this organism endogenous ribonuclease 3 and Cas9 are required for correct coprocessing of pre-crRNA and the trans-encoded small RNA (tracrRNA). Cas9, crRNA and tracrRNA are required for cleavage of invading DNA. Complements pre-crRNA and tracrRNA coprocessing defects in an rnc deletion in S.pyogenes strain 370. This is Ribonuclease 3 from Neisseria meningitidis serogroup A / serotype 4A (strain DSM 15465 / Z2491).